A 371-amino-acid polypeptide reads, in one-letter code: Gustatory receptor-like 65a (371 aa).

Over 1–13 (MREVNLLNRFTRQ) the chain is Cytoplasmic. Residues 14–34 (FLFLIVLVTQICGVATFVYNS) form a helical membrane-spanning segment. At 35–42 (KAQCFRQS) the chain is on the extracellular side. A helical transmembrane segment spans residues 43 to 63 (GFLRFYSSLVLIFLALFLIVT). At 64-72 (TSKMFHNLQ) the chain is on the cytoplasmic side. A helical membrane pass occupies residues 73-93 (AVWPYVVGSVIILVVRIHGLL). Over 94–126 (ESAEIVELLNQMLRIMRQVNLMARHPNLFRLKH) the chain is Extracellular. The helical transmembrane segment at 127 to 147 (LLLLLLALQNLLRSLNTIVGI) threads the bilayer. The Cytoplasmic portion of the chain corresponds to 148–161 (SNHSAEAYDSFLNS). Residues 162–182 (VILLIILAVLLSFLLQITINI) traverse the membrane as a helical segment. Over 183-251 (CLFVVLIATY…FHITVRIIRH (69 aa)) the chain is Extracellular. A helical membrane pass occupies residues 252–272 (FRFHWLCAIIYGLLPFFSLTA). Residues 273-277 (KDQNG) lie on the Cytoplasmic side of the membrane. A helical membrane pass occupies residues 278–298 (FNFLIISALNIIFQWTIFAIL). Residues 299-371 (SRESRITRSL…FVNRLEYLHI (73 aa)) are Extracellular-facing.

It localises to the cell membrane. In Drosophila melanogaster (Fruit fly), this protein is Gustatory receptor-like 65a.